The primary structure comprises 450 residues: Neuronal acetylcholine receptor subunit alpha-10 (450 aa).

Positions 1 to 24 (MGLRSHHLSLGLLLLFLLPAECLG) are cleaved as a signal peptide. Over 25–237 (AEGRLALKLF…FTLLLRRRAA (213 aa)) the chain is Extracellular. Residues Asn-40 and Asn-56 are each glycosylated (N-linked (GlcNAc...) asparagine). 2 disulfide bridges follow: Cys-154-Cys-168 and Cys-218-Cys-219. The next 3 membrane-spanning stretches (helical) occupy residues 238–258 (AYVC…PLAF), 268–288 (VSLG…LAES), and 302–322 (YMAT…IMNL). The Cytoplasmic portion of the chain corresponds to 323–428 (HYCGPSVRPV…WKRLARVMDR (106 aa)). Residues 355-380 (EPCGQSRPPELSPSPQSPEGGAGPPA) form a disordered region. A helical transmembrane segment spans residues 429-449 (FFLAIFFSMALVMSLLVLVQA).

Belongs to the ligand-gated ion channel (TC 1.A.9) family. Acetylcholine receptor (TC 1.A.9.1) subfamily. Alpha-10/CHRNA10 sub-subfamily. As to quaternary structure, forms homo- or heterooligomeric channels in conjunction with CHRNA10. The native outer hair cell receptor may be composed of CHRNA9:CHRNA10 heterooligomers. Found in the stoichiometric form (CHRNA9)2:(CHRNA10)3. Expressed in inner-ear tissue, tonsil, immortalized B-cells, cultured T-cells and peripheral blood lymphocytes.

It is found in the synaptic cell membrane. It localises to the cell membrane. It carries out the reaction Ca(2+)(in) = Ca(2+)(out). The enzyme catalyses K(+)(in) = K(+)(out). It catalyses the reaction Na(+)(in) = Na(+)(out). The catalysed reaction is Mg(2+)(in) = Mg(2+)(out). With respect to regulation, activated by a myriad of ligands such as acetylcholine. AChR activity is inhibited by the antagonists alpha-conotoxins RgIA and GeXXA, small disulfide-constrained peptides from cone snails. Component of neuronal acetylcholine receptors (nAChRs) that function as pentameric, ligand-gated cation channels with high calcium permeability. nAChRs are excitatory neurotrasnmitter receptors formed by a collection of nAChR subunits. Each nAchR subunit confers differential attributes to channel properties, including activation, deactivation and desensitization kinetics, pH sensitivity, cation permeability, and binding to allosteric modulators. Forms heteropentamers with CHRNA9. Expressed in the inner ear, in sympathetic neurons and in other non-neuronal cells, such as skin keratinocytes and lymphocytes. nAChR formed by CHRNA9:CHRNA10 is involved in modulation of auditory stimuli. The channel is permeable to a range of divalent cations including calcium, the influx of which may activate a potassium current which hyperpolarizes the cell membrane. In the ear, mediates synaptic transmission between efferent olivocochlear fibers and hair cells of the cochlea, this may lead to a reduction in basilar membrane motion, altering the activity of auditory nerve fibers and reducing the range of dynamic hearing. This may protect against acoustic trauma. May also regulate keratinocyte adhesion. This Homo sapiens (Human) protein is Neuronal acetylcholine receptor subunit alpha-10.